The chain runs to 580 residues: CRISPR-associated exonuclease Cas4/endonuclease Cas1 fusion (580 aa).

The tract at residues 1–223 (MAPSDTPPSA…RCSLLPICLP (223 aa)) is CRISPR-associated exonuclease Cas4. A [4Fe-4S] cluster-binding site is contributed by Cys44. Asp112 and Glu125 together coordinate Mn(2+). The [4Fe-4S] cluster site is built by Cys212, Cys215, and Cys221. The interval 248–580 (LYGQTPGARI…IPRYPHYCPR (333 aa)) is CRISPR-associated endonuclease Cas1. Mn(2+) contacts are provided by Glu401, His472, and Glu487.

It in the N-terminal section; belongs to the CRISPR-associated exonuclease Cas4 family. In the C-terminal section; belongs to the CRISPR-associated endonuclease Cas1 family. Homodimer, forms a heterotetramer with a Cas2 homodimer. Requires [4Fe-4S] cluster as cofactor. It depends on Mg(2+) as a cofactor. Mn(2+) is required as a cofactor.

The enzyme catalyses exonucleolytic cleavage in the 5'- to 3'-direction to yield nucleoside 3'-phosphates.. CRISPR (clustered regularly interspaced short palindromic repeat), is an adaptive immune system that provides protection against mobile genetic elements (viruses, transposable elements and conjugative plasmids). CRISPR clusters contain spacers, sequences complementary to antecedent mobile elements, and target invading nucleic acids. CRISPR clusters are transcribed and processed into CRISPR RNA (crRNA). The Cas4 region acts as a ssDNA exonuclease, while the Cas1 region acts as a dsDNA endonuclease. Involved in the integration of spacer DNA into the CRISPR cassette. This Rhodospirillum rubrum (strain ATCC 11170 / ATH 1.1.1 / DSM 467 / LMG 4362 / NCIMB 8255 / S1) protein is CRISPR-associated exonuclease Cas4/endonuclease Cas1 fusion (cas4-cas1).